Consider the following 710-residue polypeptide: Solute carrier organic anion transporter family member 3A1 (710 aa).

Residue methionine 1 is modified to N-acetylmethionine. The span at 1 to 15 shows a compositional bias: gly residues; that stretch reads MQGKKPGGSSGGGRS. The interval 1-25 is disordered; it reads MQGKKPGGSSGGGRSGELQGDEAQR. The Cytoplasmic segment spans residues 1-40; that stretch reads MQGKKPGGSSGGGRSGELQGDEAQRNKKKKKKVSCFSNIK. Residues 41–60 traverse the membrane as a helical segment; sequence IFLVSECALMLAQGTVGAYL. Residues 61 to 79 lie on the Extracellular side of the membrane; that stretch reads VSVLTTLERRFNLQSADVG. Residues 80–100 form a helical membrane-spanning segment; sequence VIASSFEIGNLALILFVSYFG. At 101–106 the chain is on the cytoplasmic side; the sequence is ARGHRP. The helical transmembrane segment at 107-131 threads the bilayer; the sequence is RLIGCGGIVMALGALLSALPEFLTH. The Extracellular segment spans residues 132–174; the sequence is QYKYEAGEIRWGAEGRDVCAANGSGGDEGPDPDLICRNRTATN. Asparagine 153 and asparagine 169 each carry an N-linked (GlcNAc...) asparagine glycan. A helical transmembrane segment spans residues 175-203; the sequence is MMYLLLIGAQVLLGIGATPVQPLGVSYID. Over 204 to 222 the chain is Cytoplasmic; sequence DHVRRKDSSLYIGILFTML. Residues 223 to 243 form a helical membrane-spanning segment; it reads VFGPACGFILGSFCTKIYVDA. The Extracellular portion of the chain corresponds to 244–261; that stretch reads VFIDTSNLDITPDDPRWI. Residues 262-286 form a helical membrane-spanning segment; sequence GAWWGGFLLCGALLFFSSLLMFGFP. The Cytoplasmic portion of the chain corresponds to 287-344; the sequence is QSLPPHSEPAMESEQAMLSEREYERPKPSNGVLRHPLEPDSSASCFQQLRVIPKVTKH. A helical membrane pass occupies residues 345-366; sequence LLSNPVFTCIILAACMEIAVVA. The Extracellular portion of the chain corresponds to 367–386; the sequence is GFAAFLGKYLEQQFNLTTSS. Asparagine 381 carries an N-linked (GlcNAc...) asparagine glycan. Residues 387 to 410 form a helical membrane-spanning segment; the sequence is ANQLLGMTAIPCACLGIFLGGLLV. The Cytoplasmic segment spans residues 411–414; sequence KKLS. A helical transmembrane segment spans residues 415 to 438; the sequence is LSALGAIRMAMLVNLVSTACYVSF. Residues 439-539 lie on the Extracellular side of the membrane; sequence LFLGCDTGPV…PGCQEAFLTF (101 aa). N-linked (GlcNAc...) asparagine glycosylation occurs at asparagine 457. In terms of domain architecture, Kazal-like spans 465–513; it reads LDPYSPCNNNCECQTDSFTPVCGADGITYLSACFAGCNSTNLTGCACLT. 3 disulfide bridges follow: cysteine 471/cysteine 501, cysteine 477/cysteine 497, and cysteine 486/cysteine 511. N-linked (GlcNAc...) asparagine glycosylation is found at asparagine 502, asparagine 505, and asparagine 519. The chain crosses the membrane as a helical span at residues 540–562; the sequence is LCVMCICSLIGAMAQTPSVIILI. Residues 563–571 are Cytoplasmic-facing; that stretch reads RTVSPELKS. A helical transmembrane segment spans residues 572–597; it reads YALGVLFLLLRLLGFIPPPLIFGAGI. The Extracellular segment spans residues 598 to 630; that stretch reads DSTCLFWSTFCGEQGACVLYDNVVYRYLYVSIA. The helical transmembrane segment at 631–648 threads the bilayer; it reads IALKSFAFILYTTTWQCL. Over 649–705 the chain is Cytoplasmic; it reads RKNYKRYIKNHEGGLSTSEFFASTLTLDNLGRDPVPANQTHRTKFIYNLEDHEWCEN.

This sequence belongs to the organo anion transporter (TC 2.A.60) family. As to expression, generally the expression of isoform 1 is higher than that of isoform 2. In terms of tissue distribution, expressed in placental trophoblasts. Expressed in pancreas, kidney, liver, lung, brain, heart, cerebellum, peripheral blood leukocyte, colon, small intestine, ovary, testis, prostate, thyroid, thymus and spleen. Expressed in fetal brain, heart, kidney, liver, lung, skeletal muscle, spleen and pancreas. In testis, detected in spermatogonia at different stages and absent from Sertoli cells. Expressed in the choroid plexus epithelium, at the basolateral membrane. In brain, also very abundant in the gray matter of the frontal cortex, but not associated with neuronal cell bodies. Not detected in the white matter. Expressed in heart, brain, cerebellum, testis, lung, thyroid, spoleen and liver. In testis, primarily localized to the basal membrane of Sertoli cells and weakly expressed within the tubules. In testis, also present in spermatogonia at different stages. In brain, expressed in the choroid plexus epithelium, at the apical membrane as well as in the subapical intracellular vesicular compartments. In brain, also associated with neuronal bodies and axons in both the gray and the white matters of the frontal cortex.

It is found in the basolateral cell membrane. The protein localises to the apical cell membrane. It localises to the basal cell membrane. It catalyses the reaction L-thyroxine(out) = L-thyroxine(in). The enzyme catalyses prostaglandin E1(out) = prostaglandin E1(in). The catalysed reaction is prostaglandin E2(out) = prostaglandin E2(in). It carries out the reaction prostaglandin F2alpha(out) = prostaglandin F2alpha(in). It catalyses the reaction (5Z,8Z,11Z,14Z)-eicosatetraenoate(out) = (5Z,8Z,11Z,14Z)-eicosatetraenoate(in). The enzyme catalyses taurocholate(out) = taurocholate(in). The catalysed reaction is glycocholate(out) = glycocholate(in). It carries out the reaction estrone 3-sulfate(out) = estrone 3-sulfate(in). It catalyses the reaction argipressin(out) = argipressin(in). With respect to regulation, stimulated by extracellular acidic pH. Functionally, putative organic anion antiporter with apparent broad substrate specificity. Recognizes various substrates including thyroid hormone L-thyroxine, prostanoids such as prostaglandin E1 and E2, bile acids such as taurocholate, glycolate and glycochenodeoxycholate and peptide hormones such as L-arginine vasopressin, likely operating in a tissue-specific manner. The transport mechanism, its electrogenicity and potential tissue-specific counterions remain to be elucidated. In Homo sapiens (Human), this protein is Solute carrier organic anion transporter family member 3A1 (SLCO3A1).